Here is a 1287-residue protein sequence, read N- to C-terminus: Cell adhesion molecule-related/down-regulated by oncogenes (1287 aa).

The first 25 residues, 1–25, serve as a signal peptide directing secretion; it reads MHPDLGPLCTLLYVTLTILCSSVSS. Residues 26-963 lie on the Extracellular side of the membrane; the sequence is DLAPYFTSEP…PATSPARSSD (938 aa). Ig-like C2-type domains follow at residues 29 to 114, 120 to 204, 225 to 303, 310 to 396, and 405 to 516; these read PYFT…ATVS, DFGS…LKVE, PTHS…KYVT, EHAS…GRLE, and PVII…ASLM. A disulfide bond links Cys50 and Cys97. Asn88, Asn100, Asn180, Asn287, Asn294, Asn342, and Asn427 each carry an N-linked (GlcNAc...) asparagine glycan. 2 disulfides stabilise this stretch: Cys141–Cys191 and Cys243–Cys290. 2 disulfides stabilise this stretch: Cys333–Cys380 and Cys426–Cys500. The segment at 531-553 is disordered; sequence LPDAAQNDDRSKRDGSETGLLSS. Basic and acidic residues predominate over residues 537–546; that stretch reads NDDRSKRDGS. The N-linked (GlcNAc...) asparagine glycan is linked to Asn570. 3 consecutive Fibronectin type-III domains span residues 579-677, 723-821, and 826-926; these read APII…SKEK, APDR…FPNR, and PITG…TKVK. N-linked (GlcNAc...) asparagine glycosylation occurs at Asn873. A disordered region spans residues 933–955; that stretch reads EYPVKDLSTPPNSLGSGGNVGPA. The chain crosses the membrane as a helical span at residues 964 to 984; the sequence is MLYLIVGCVLGVMVLILMVFI. Topologically, residues 985–1287 are cytoplasmic; that stretch reads AMCLWKNRQQ…TEVLQQPRET (303 aa). The disordered stretch occupies residues 1268–1287; the sequence is SPPGIPLDSPTEVLQQPRET.

As to quaternary structure, part of a complex that contains BOC, CDON, NEO1, cadherins and CTNNB1. Interacts with NTN3. Interacts with PTCH1. Interacts with GAS1. Interacts with DHH, IHH and SHH. In terms of processing, N-glycosylated.

It localises to the cell membrane. Functionally, component of a cell-surface receptor complex that mediates cell-cell interactions between muscle precursor cells. Promotes differentiation of myogenic cells. The chain is Cell adhesion molecule-related/down-regulated by oncogenes (CDON) from Homo sapiens (Human).